Here is a 368-residue protein sequence, read N- to C-terminus: UDP-N-acetylglucosamine--N-acetylmuramyl-(pentapeptide) pyrophosphoryl-undecaprenol N-acetylglucosamine transferase (368 aa).

UDP-N-acetyl-alpha-D-glucosamine is bound by residues 10–12 (TGG), Asn128, Arg170, Ser199, Ile250, and Gln295.

Belongs to the glycosyltransferase 28 family. MurG subfamily.

It localises to the cell inner membrane. The catalysed reaction is di-trans,octa-cis-undecaprenyl diphospho-N-acetyl-alpha-D-muramoyl-L-alanyl-D-glutamyl-meso-2,6-diaminopimeloyl-D-alanyl-D-alanine + UDP-N-acetyl-alpha-D-glucosamine = di-trans,octa-cis-undecaprenyl diphospho-[N-acetyl-alpha-D-glucosaminyl-(1-&gt;4)]-N-acetyl-alpha-D-muramoyl-L-alanyl-D-glutamyl-meso-2,6-diaminopimeloyl-D-alanyl-D-alanine + UDP + H(+). Its pathway is cell wall biogenesis; peptidoglycan biosynthesis. Cell wall formation. Catalyzes the transfer of a GlcNAc subunit on undecaprenyl-pyrophosphoryl-MurNAc-pentapeptide (lipid intermediate I) to form undecaprenyl-pyrophosphoryl-MurNAc-(pentapeptide)GlcNAc (lipid intermediate II). This Chlorobium phaeovibrioides (strain DSM 265 / 1930) (Prosthecochloris vibrioformis (strain DSM 265)) protein is UDP-N-acetylglucosamine--N-acetylmuramyl-(pentapeptide) pyrophosphoryl-undecaprenol N-acetylglucosamine transferase.